The primary structure comprises 205 residues: Putative 3-methyladenine DNA glycosylase (205 aa).

The protein belongs to the DNA glycosylase MPG family.

The protein is Putative 3-methyladenine DNA glycosylase of Mycolicibacterium paratuberculosis (strain ATCC BAA-968 / K-10) (Mycobacterium paratuberculosis).